We begin with the raw amino-acid sequence, 61 residues long: Small ribosomal subunit protein uS14 (61 aa).

Zn(2+) is bound by residues Cys-24, Cys-27, Cys-40, and Cys-43.

Belongs to the universal ribosomal protein uS14 family. Zinc-binding uS14 subfamily. As to quaternary structure, part of the 30S ribosomal subunit. Contacts proteins S3 and S10. Requires Zn(2+) as cofactor.

Binds 16S rRNA, required for the assembly of 30S particles and may also be responsible for determining the conformation of the 16S rRNA at the A site. The sequence is that of Small ribosomal subunit protein uS14 from Borrelia garinii subsp. bavariensis (strain ATCC BAA-2496 / DSM 23469 / PBi) (Borreliella bavariensis).